Here is a 144-residue protein sequence, read N- to C-terminus: Putative pre-16S rRNA nuclease (144 aa).

It belongs to the YqgF nuclease family.

Its subcellular location is the cytoplasm. Its function is as follows. Could be a nuclease involved in processing of the 5'-end of pre-16S rRNA. This chain is Putative pre-16S rRNA nuclease, found in Acaryochloris marina (strain MBIC 11017).